The sequence spans 89 residues: Small ribosomal subunit protein uS15 (89 aa).

The protein belongs to the universal ribosomal protein uS15 family. As to quaternary structure, part of the 30S ribosomal subunit. Forms a bridge to the 50S subunit in the 70S ribosome, contacting the 23S rRNA.

In terms of biological role, one of the primary rRNA binding proteins, it binds directly to 16S rRNA where it helps nucleate assembly of the platform of the 30S subunit by binding and bridging several RNA helices of the 16S rRNA. Its function is as follows. Forms an intersubunit bridge (bridge B4) with the 23S rRNA of the 50S subunit in the ribosome. The chain is Small ribosomal subunit protein uS15 from Burkholderia ambifaria (strain MC40-6).